The following is a 253-amino-acid chain: Vitamin B12 import ATP-binding protein BtuD (253 aa).

Residues 1–236 (MTNQLMALNQ…NTLSRVFAAD (236 aa)) enclose the ABC transporter domain. 34-41 (GPNGSGKS) provides a ligand contact to ATP.

The protein belongs to the ABC transporter superfamily. Vitamin B12 importer (TC 3.A.1.13.1) family. The complex is composed of two ATP-binding proteins (BtuD), two transmembrane proteins (BtuC) and a solute-binding protein (BtuF).

The protein resides in the cell inner membrane. The catalysed reaction is an R-cob(III)alamin(out) + ATP + H2O = an R-cob(III)alamin(in) + ADP + phosphate + H(+). In terms of biological role, part of the ABC transporter complex BtuCDF involved in vitamin B12 import. Responsible for energy coupling to the transport system. In Photorhabdus laumondii subsp. laumondii (strain DSM 15139 / CIP 105565 / TT01) (Photorhabdus luminescens subsp. laumondii), this protein is Vitamin B12 import ATP-binding protein BtuD.